The chain runs to 604 residues: Protein CBFA2T1 (604 aa).

Residues 32–114 (TEKHSTMPDS…SSSSLANQQL (83 aa)) are disordered. A Phosphoserine modification is found at S41. Residues 63–86 (QGAPRTSSFTPTTLTNGTSHSPTA) are compositionally biased toward polar residues. Over residues 95–114 (NGFSNGPSSSSSSSLANQQL) the composition is skewed to low complexity. The TAFH domain maps to 120 to 215 (ARQLSKLKRF…NPAQYLAQHE (96 aa)). A disordered region spans residues 230–298 (SELLLDVNEN…LPHPTPPPPQ (69 aa)). Residues 238 to 264 (ENGKRRTPDRTKENGFDREPLHSEHPS) are compositionally biased toward basic and acidic residues. Residues 271–285 (SPGQRYSPNNGLSYQ) show a composition bias toward polar residues. Over residues 289 to 298 (LPHPTPPPPQ) the composition is skewed to pro residues. Residues 337–383 (QEEMIDHRLTDREWAEEWKHLDHLLNCIMDMVEKTRRSLTVLRRCQE) form an important for oligomerization region. The tract at residues 337-383 (QEEMIDHRLTDREWAEEWKHLDHLLNCIMDMVEKTRRSLTVLRRCQE) is nervy homology region 2 (NHR2). The segment at 401–423 (DLKKGGGSSSSHSRQQSPVNPDP) is disordered. S417 is modified (phosphoserine). Residues 443-492 (EEIWKKAEEAVNEVKRQAMTELQKAVSEAERKAHDMITTERAKMERTVAE) form a nervy homology region 3 (NHR3) region. Zn(2+) is bound by residues C515, C518, C526, C529, C535, C539, H547, and C551. The segment at 515 to 551 (CWNCGRKASETCSGCNTARYCGSFCQHKDWEKHHHIC) adopts an MYND-type zinc-finger fold. The segment covering 557-576 (AQQQGDTPAVSSSVTPNSGA) has biased composition (polar residues). The tract at residues 557-604 (AQQQGDTPAVSSSVTPNSGAGSPMDTPPAATPRSTTPGTPSTIETTPR) is disordered. Over residues 587–604 (TPRSTTPGTPSTIETTPR) the composition is skewed to low complexity.

The protein belongs to the CBFA2T family. In terms of assembly, homooligomer. Homotetramerization is mediated by nervy homology region 2 (NRH2). Can interact with CBFA2T2 and CBFA2T3; heterotetramerization between members of the CBFA2T family is proposed. Interacts with TCF12, SIN3A, HDAC1, HDAC2, HDAC3, NCOR1, NCOR2. Interacts with ATN1 (via its N-terminus); the interaction enhances the transcriptional repression. Interacts (via its N-terminus) with ZBTB16; the interaction increases the transcription repression activity of ZBTB16. AML1-MTG8/ETO fusion protein interacts with CBFB. AML1-MTG8/ETO is part of a stable transcription factor complex AETFC in leukemic cells; AETFC formation seems to be involved in recruitment of EP300. AML1-MTG8/ETO nervy homology region 2-mediated oligomerization is proposed to be homotypic, required for AML1-MTG8/ETO-mediated transformation of primary hematopoietic cells and is required for AML1-MTG8/ETO interaction with TCF12. In terms of tissue distribution, most abundantly expressed in brain. Lower levels in lung, heart, testis and ovary.

The protein resides in the nucleus. Functionally, transcriptional corepressor which facilitates transcriptional repression via its association with DNA-binding transcription factors and recruitment of other corepressors and histone-modifying enzymes. Can repress the expression of MMP7 in a ZBTB33-dependent manner. Can repress transactivation mediated by TCF12. Acts as a negative regulator of adipogenesis. The AML1-MTG8/ETO fusion protein frequently found in leukemic cells is involved in leukemogenesis and contributes to hematopoietic stem/progenitor cell self-renewal. The polypeptide is Protein CBFA2T1 (RUNX1T1) (Homo sapiens (Human)).